Here is a 520-residue protein sequence, read N- to C-terminus: Probable E3 ubiquitin-protein ligase rbrA (520 aa).

A compositionally biased stretch (acidic residues) spans 1 to 42 (MTDDEMYEDYDVDDDSAEESGNESLDDTEYDDAATQEFDFDE). The disordered stretch occupies residues 1–51 (MTDDEMYEDYDVDDDSAEESGNESLDDTEYDDAATQEFDFDENQPQRSLGK). The TRIAD supradomain stretch occupies residues 135-354 (GNVSCLICLE…GGYYNCNKYD (220 aa)). 18 residues coordinate Zn(2+): Cys-139, Cys-142, Cys-156, His-158, Cys-161, Cys-164, Cys-184, Cys-189, Cys-228, Cys-233, Cys-250, Cys-252, Cys-257, Cys-260, His-268, Cys-273, Cys-300, and Cys-303. The segment at 139 to 189 (CLICLEDYPPTQTFALICNHRYCLPCYKNYLEIKVSEGPECIYTPCPAPKC) adopts an RING-type 1 zinc-finger fold. The IBR-type zinc finger occupies 208–273 (ERFNNFILKS…EIGDHMPCPC (66 aa)). An RING-type 2; atypical zinc finger spans residues 300–333 (CPECRSPIEKNGGCMHMTCRKNAGGCGFEFCWLC). The active site involves Cys-313. Cys-318, Cys-325, Cys-330, Cys-333, His-340, and Cys-350 together coordinate Zn(2+).

Belongs to the RBR family.

The catalysed reaction is [E2 ubiquitin-conjugating enzyme]-S-ubiquitinyl-L-cysteine + [acceptor protein]-L-lysine = [E2 ubiquitin-conjugating enzyme]-L-cysteine + [acceptor protein]-N(6)-ubiquitinyl-L-lysine.. The protein operates within protein modification; protein ubiquitination. In terms of biological role, might act as an E3 ubiquitin-protein ligase. Appears to be required for normal cell-type proportioning and cell sorting during multicellular development. In addition to being necessary for a normal percentage of prestalk cells and the organization of the slug, rbrA is also necessary for spore cell viability. The polypeptide is Probable E3 ubiquitin-protein ligase rbrA (rbrA) (Dictyostelium discoideum (Social amoeba)).